The following is a 154-amino-acid chain: Large ribosomal subunit protein uL22 (154 aa).

The protein belongs to the universal ribosomal protein uL22 family. Part of the 50S ribosomal subunit.

This protein binds specifically to 23S rRNA. It makes multiple contacts with different domains of the 23S rRNA in the assembled 50S subunit and ribosome. Functionally, the globular domain of the protein is located near the polypeptide exit tunnel on the outside of the subunit, while an extended beta-hairpin is found that lines the wall of the exit tunnel in the center of the 70S ribosome. This Natronomonas pharaonis (strain ATCC 35678 / DSM 2160 / CIP 103997 / JCM 8858 / NBRC 14720 / NCIMB 2260 / Gabara) (Halobacterium pharaonis) protein is Large ribosomal subunit protein uL22.